Here is a 470-residue protein sequence, read N- to C-terminus: FLYWCH transcription factor 2 (470 aa).

The interval 102–148 is disordered; that stretch reads SQLISEDTRPSASSSPSSTATAVSNSGQSNATSTSSSSTEPEYKPRN. A compositionally biased stretch (low complexity) spans 111–140; the sequence is PSASSSPSSTATAVSNSGQSNATSTSSSST. The FLYWCH-type zinc finger occupies 145 to 204; sequence KPRNVREKVYADGYIMSFDKKSCCGTKEFWRCERKNDCNARMHSDINTREIVRKLHPHNH.

Its function is as follows. Probable transcription factor. May bind to the promoters of target genes, including micro-RNA genes, in order to repress expression, and acting redundantly with flh-1 and flh-3. The sequence is that of FLYWCH transcription factor 2 from Caenorhabditis elegans.